Here is a 914-residue protein sequence, read N- to C-terminus: Protein translocase subunit SecA (914 aa).

Residues Gln86, 104 to 108 (GEGKT), and Asp512 each bind ATP. Zn(2+)-binding residues include Cys898, Cys900, Cys909, and His910.

Belongs to the SecA family. Monomer and homodimer. Part of the essential Sec protein translocation apparatus which comprises SecA, SecYEG and auxiliary proteins SecDF-YajC and YidC. The cofactor is Zn(2+).

The protein localises to the cell inner membrane. It is found in the cytoplasm. The catalysed reaction is ATP + H2O + cellular proteinSide 1 = ADP + phosphate + cellular proteinSide 2.. Part of the Sec protein translocase complex. Interacts with the SecYEG preprotein conducting channel. Has a central role in coupling the hydrolysis of ATP to the transfer of proteins into and across the cell membrane, serving both as a receptor for the preprotein-SecB complex and as an ATP-driven molecular motor driving the stepwise translocation of polypeptide chains across the membrane. In Bordetella petrii (strain ATCC BAA-461 / DSM 12804 / CCUG 43448), this protein is Protein translocase subunit SecA.